We begin with the raw amino-acid sequence, 238 residues long: Phosphoribosylaminoimidazole-succinocarboxamide synthase (238 aa).

It belongs to the SAICAR synthetase family.

The enzyme catalyses 5-amino-1-(5-phospho-D-ribosyl)imidazole-4-carboxylate + L-aspartate + ATP = (2S)-2-[5-amino-1-(5-phospho-beta-D-ribosyl)imidazole-4-carboxamido]succinate + ADP + phosphate + 2 H(+). Its pathway is purine metabolism; IMP biosynthesis via de novo pathway; 5-amino-1-(5-phospho-D-ribosyl)imidazole-4-carboxamide from 5-amino-1-(5-phospho-D-ribosyl)imidazole-4-carboxylate: step 1/2. The protein is Phosphoribosylaminoimidazole-succinocarboxamide synthase of Desulfitobacterium hafniense (strain Y51).